The following is a 338-amino-acid chain: NADPH dehydrogenase (338 aa).

22-25 (SPMC) contacts FMN. Residue Tyr-27 coordinates substrate. Residues Ala-59 and Gln-101 each coordinate FMN. 163–166 (HAAH) is a substrate binding site. FMN-binding positions include Arg-214 and 306-307 (GR).

This sequence belongs to the NADH:flavin oxidoreductase/NADH oxidase family. NamA subfamily. Homotetramer. Requires FMN as cofactor.

The catalysed reaction is A + NADPH + H(+) = AH2 + NADP(+). In terms of biological role, catalyzes the reduction of the double bond of an array of alpha,beta-unsaturated aldehydes and ketones. It also reduces the nitro group of nitroester and nitroaromatic compounds. It could have a role in detoxification processes. The sequence is that of NADPH dehydrogenase from Listeria monocytogenes serotype 4b (strain CLIP80459).